The chain runs to 201 residues: UPF0056 membrane protein PYRAB13050 (201 aa).

Helical transmembrane passes span 8 to 28 (FAVLYVGLFAITNPVGAVPIF), 49 to 69 (ITVLVTLLTFALVGKWIFKFF), 73 to 93 (VDAFAIAGGILLFRMGMEMLS), 111 to 131 (VAVIPLAIPLISGPGAITTVM), 140 to 160 (PIVIATIIAIGISVYIILASG), and 181 to 201 (LILTSMAIQMIINGIKGAFGI).

The protein belongs to the UPF0056 (MarC) family.

It is found in the cell membrane. The protein is UPF0056 membrane protein PYRAB13050 of Pyrococcus abyssi (strain GE5 / Orsay).